The following is an 851-amino-acid chain: Alanine--tRNA ligase (851 aa).

Positions 554, 558, 656, and 660 each coordinate Zn(2+).

Belongs to the class-II aminoacyl-tRNA synthetase family. Zn(2+) serves as cofactor.

The protein localises to the cytoplasm. It carries out the reaction tRNA(Ala) + L-alanine + ATP = L-alanyl-tRNA(Ala) + AMP + diphosphate. Functionally, catalyzes the attachment of alanine to tRNA(Ala) in a two-step reaction: alanine is first activated by ATP to form Ala-AMP and then transferred to the acceptor end of tRNA(Ala). Also edits incorrectly charged Ser-tRNA(Ala) and Gly-tRNA(Ala) via its editing domain. The chain is Alanine--tRNA ligase from Aliarcobacter butzleri (strain RM4018) (Arcobacter butzleri).